The primary structure comprises 567 residues: Delta(24)-sterol reductase (567 aa).

Topologically, residues 1 to 24 (MSDLEAPLRPKRKKIWVDYFVKFR) are lumenal. Residues 25–45 (WILVIFVVLPISFTLYFLTYL) traverse the membrane as a helical; Signal-anchor segment. An FAD-binding PCMH-type domain is found at 45 to 231 (LGDVRSEWKS…VAAEVKLIPI (187 aa)). Residues 46 to 567 (GDVRSEWKSF…AYPEVDQPPD (522 aa)) lie on the Cytoplasmic side of the membrane. Residues 520-541 (CRRKYGAVGTFMSVYYKCKKGR) are interaction with calmodulin. The disordered stretch occupies residues 548–567 (REAEQAHLDTAYPEVDQPPD).

It belongs to the DIMINUTO family. In terms of tissue distribution, highly expressed in the apical region and root tips and lower levels in immature and mature internodes and leaves.

It localises to the membrane. It catalyses the reaction lathosterol + NADP(+) = 5alpha-cholesta-7,24-dien-3beta-ol + NADPH + H(+). Plays a critical role in the general process of plant cell elongation. This is Delta(24)-sterol reductase (DIM) from Pisum sativum (Garden pea).